Reading from the N-terminus, the 200-residue chain is Coiled-coil domain-containing protein 28B (200 aa).

At M1 the chain carries N-acetylmethionine. Residues 1-10 (MEDKKKKRSP) show a composition bias toward basic residues. Positions 1–49 (MEDKKKKRSPKPCLTQPAQAPGTLRRVPVPTSHSGSLALGLPHLPSPKQ) are disordered. Phosphoserine is present on residues S46 and S115. The segment covering 140–152 (GEEEDEEEEEDGV) has biased composition (acidic residues). A disordered region spans residues 140-165 (GEEEDEEEEEDGVTEGLPEEQKKTMA). A coiled-coil region spans residues 158 to 189 (EEQKKTMADRNLDQLLSNLEDLSNSIQKLHLA).

In terms of assembly, interacts with BBS1, BBS2, BBS4, BBS5, BBS6, BBS7 and TTC8/BBS8. Interacts with MAPKAP1/SIN1 isoform 1 and RICTOR. In terms of tissue distribution, expressed in the retina, pericardium and limb epithelium.

The protein resides in the cytoplasm. Its subcellular location is the cytoskeleton. It localises to the microtubule organizing center. The protein localises to the centrosome. Its function is as follows. Involved in ciliogenesis. Regulates cilia length through its interaction with MAPKAP1/SIN1 but independently of mTORC2 complex. Modulates mTORC2 complex assembly and function, possibly enhances AKT1 phosphorylation. Does not seem to modulate assembly and function of mTORC1 complex. The chain is Coiled-coil domain-containing protein 28B (Ccdc28b) from Mus musculus (Mouse).